The primary structure comprises 146 residues: Putative pre-16S rRNA nuclease (146 aa).

This sequence belongs to the YqgF nuclease family.

The protein resides in the cytoplasm. Its function is as follows. Could be a nuclease involved in processing of the 5'-end of pre-16S rRNA. The polypeptide is Putative pre-16S rRNA nuclease (Burkholderia pseudomallei (strain 668)).